Consider the following 351-residue polypeptide: Phosphoribosylformylglycinamidine cyclo-ligase (351 aa).

It belongs to the AIR synthase family.

It is found in the cytoplasm. It carries out the reaction 2-formamido-N(1)-(5-O-phospho-beta-D-ribosyl)acetamidine + ATP = 5-amino-1-(5-phospho-beta-D-ribosyl)imidazole + ADP + phosphate + H(+). The protein operates within purine metabolism; IMP biosynthesis via de novo pathway; 5-amino-1-(5-phospho-D-ribosyl)imidazole from N(2)-formyl-N(1)-(5-phospho-D-ribosyl)glycinamide: step 2/2. The polypeptide is Phosphoribosylformylglycinamidine cyclo-ligase (Lysinibacillus sphaericus (strain C3-41)).